A 747-amino-acid polypeptide reads, in one-letter code: Anoctamin-9 (747 aa).

The Cytoplasmic segment spans residues 1-193; it reads MQDDESSQIF…LYFTWLGWYT (193 aa). Residues 194-214 traverse the membrane as a helical segment; that stretch reads YMLVPAAVVGLIVFLSGFALF. Residues 215 to 259 lie on the Extracellular side of the membrane; that stretch reads DSSQISKEICSANDIFMCPLGDHSHRYLRLSEMCTFAKLTHLFDN. Ser-245 is subject to Phosphoserine; by PKA. The helical transmembrane segment at 260 to 280 threads the bilayer; it reads EGTVLFAIFMALWATVFLEIW. Topologically, residues 281–326 are cytoplasmic; it reads KRKRAHEVQSWKLYEWDEEEEEMALELINSPHYKLKDHRHSYLSST. A helical transmembrane segment spans residues 327–347; sequence IILILSLFMICLMIGMAHVLV. Over 348–364 the chain is Extracellular; sequence VYRVLAGALFSSLVKQQ. A helical transmembrane segment spans residues 365–385; sequence VTTAVVVTGAVVHYIIIVIMT. Topologically, residues 386–414 are cytoplasmic; the sequence is KVNKYVALKLCKFEESGTFSEQERKFTVK. The helical transmembrane segment at 415 to 435 threads the bilayer; it reads FFILQFFAHFSSLIYIAFILG. At 436 to 543 the chain is on the extracellular side; sequence RINGHPGKST…EMMIQYGFTT (108 aa). The helical transmembrane segment at 544 to 564 threads the bilayer; sequence IFVAAFPLAPLLALFSNLVEI. The Cytoplasmic segment spans residues 565–595; it reads RLDAIKMVRLQRRLVPRKAKDIGTWLQVLET. The helical transmembrane segment at 596 to 616 threads the bilayer; sequence IGVLAVIANGMVIAFTSEFIP. At 617–695 the chain is on the extracellular side; that stretch reads RVVYKYHYGP…FWFILAIRLT (79 aa). Residues Asn-630, Asn-643, Asn-665, and Asn-681 are each glycosylated (N-linked (GlcNAc...) asparagine). Residues 696 to 716 form a helical membrane-spanning segment; the sequence is FVILFEHFALCIKLIAAWFVP. Topologically, residues 717–747 are cytoplasmic; sequence DVPQKVKNEVLQEKYDRIRHRMRFSSRSTDV.

The protein belongs to the anoctamin family. Post-translationally, phosphorylation on Ser-245 by cAMP-dependent protein kinase A (PKA)is essential for activation of its cation channel activity. As to expression, highly expressed in the olfactory epithelium, particularly in mature olfactory sensory neurons (at protein level). Expressed in the kidney (at protein level). Predominant expression seen in epithelial tissues. Highly expressed in the small intestine, colon and stomach.

Its subcellular location is the cell membrane. It localises to the endoplasmic reticulum. It carries out the reaction a 1,2-diacyl-sn-glycero-3-phospho-L-serine(in) = a 1,2-diacyl-sn-glycero-3-phospho-L-serine(out). It catalyses the reaction a beta-D-galactosyl-(1&lt;-&gt;1')-N-acylsphing-4-enine(out) = a beta-D-galactosyl-(1&lt;-&gt;1')-N-acylsphing-4-enine(in). The enzyme catalyses a 1,2-diacyl-sn-glycero-3-phosphocholine(in) = a 1,2-diacyl-sn-glycero-3-phosphocholine(out). The catalysed reaction is Ca(2+)(in) = Ca(2+)(out). It carries out the reaction Na(+)(in) = Na(+)(out). It catalyses the reaction K(+)(in) = K(+)(out). With respect to regulation, cation channel activity is activated via phosphorylation on Ser-245 by cAMP-dependent protein kinase A (PKA). Inhibited by NaCl. Functionally, PKA-activated nonselective cation channel. Discriminates poorly among cations but is more permeable to Ca(2+) ions than to monovalent cations. Acts as a calcium-activated calcium permeable channel which may operate as a endoplasmic reticulum (ER) Ca(2+)-leak channel, reducing the loading of the ER Ca(2+) store. Regulates intracellular Ca2+ signals, ion channel activity, and cytokine release in the renal tissue. Plays an important role in olfaction, amplifying cAMP-evoked cyclic nucleotide-gated (CNG) channel currents in the olfactory sensory neurons. Has calcium-dependent phospholipid scramblase activity; scrambles phosphatidylserine, phosphatidylcholine and galactosylceramide. Does not exhibit calcium-activated chloride channel (CaCC) activity. Can inhibit the activity of ANO1. The protein is Anoctamin-9 of Mus musculus (Mouse).